A 651-amino-acid chain; its full sequence is UvrABC system protein C (651 aa).

Residues 21 to 100 (TEPGCYLMRD…IKNQQPHFNV (80 aa)) enclose the GIY-YIG domain. Residues 210 to 245 (DELRQLLNQQMERYAERLDFESAARIRDQLQGIDQL) enclose the UVR domain.

It belongs to the UvrC family. Interacts with UvrB in an incision complex.

It is found in the cytoplasm. The UvrABC repair system catalyzes the recognition and processing of DNA lesions. UvrC both incises the 5' and 3' sides of the lesion. The N-terminal half is responsible for the 3' incision and the C-terminal half is responsible for the 5' incision. This is UvrABC system protein C from Synechococcus sp. (strain CC9311).